The chain runs to 319 residues: 7,8-didemethyl-8-hydroxy-5-deazariboflavin synthase (319 aa).

One can recognise a Radical SAM core domain in the interval 5–236 (VTYSPAYTIV…SNITLQIPPN (232 aa)). [4Fe-4S] cluster is bound by residues C19, C23, and C26.

It belongs to the radical SAM superfamily. CofG family. As to quaternary structure, consists of two subunits, CofG and CofH. [4Fe-4S] cluster is required as a cofactor.

The catalysed reaction is 5-amino-5-(4-hydroxybenzyl)-6-(D-ribitylimino)-5,6-dihydrouracil + S-adenosyl-L-methionine = 7,8-didemethyl-8-hydroxy-5-deazariboflavin + 5'-deoxyadenosine + L-methionine + NH4(+) + H(+). It functions in the pathway cofactor biosynthesis; coenzyme F0 biosynthesis. Its function is as follows. Catalyzes the radical-mediated synthesis of 7,8-didemethyl-8-hydroxy-5-deazariboflavin from 5-amino-5-(4-hydroxybenzyl)-6-(D-ribitylimino)-5,6-dihydrouracil. The polypeptide is 7,8-didemethyl-8-hydroxy-5-deazariboflavin synthase (Trichodesmium erythraeum (strain IMS101)).